Reading from the N-terminus, the 367-residue chain is Germination protease (367 aa).

The propeptide occupies 1-15 (MKEPLDLSKYSVRTD).

The protein belongs to the peptidase A25 family. In terms of assembly, homotetramer. Post-translationally, autoproteolytically processed. The inactive tetrameric zymogen termed p46 autoprocesses to a smaller form termed p41, which is active only during spore germination.

It carries out the reaction Endopeptidase action with P4 Glu or Asp, P1 preferably Glu &gt; Asp, P1' hydrophobic and P2' Ala.. Its function is as follows. Initiates the rapid degradation of small, acid-soluble proteins during spore germination. The sequence is that of Germination protease from Bacillus cereus (strain AH187).